The primary structure comprises 280 residues: Undecaprenyl-diphosphatase (280 aa).

7 helical membrane passes run 1-21, 45-65, 90-110, 115-135, 151-171, 226-246, and 260-280; these read MTLL…PFPV, FLPF…GVFW, IFGL…LLEH, VFGT…LLMV, IATL…LALL, IMVQ…ICSL, and LTPF…VILL.

The protein belongs to the UppP family.

It localises to the cell inner membrane. It catalyses the reaction di-trans,octa-cis-undecaprenyl diphosphate + H2O = di-trans,octa-cis-undecaprenyl phosphate + phosphate + H(+). Catalyzes the dephosphorylation of undecaprenyl diphosphate (UPP). Confers resistance to bacitracin. The chain is Undecaprenyl-diphosphatase from Gluconobacter oxydans (strain 621H) (Gluconobacter suboxydans).